The chain runs to 205 residues: tRNA (guanine-N(7)-)-methyltransferase (205 aa).

The S-adenosyl-L-methionine site is built by Glu34, Glu59, Asp86, and Asp107. Residue Asp107 is part of the active site. Lys111 is a binding site for substrate. An interaction with RNA region spans residues 113–118; the sequence is RHEKRR. Substrate-binding positions include Asp144 and 182–185; that span reads TGYE.

This sequence belongs to the class I-like SAM-binding methyltransferase superfamily. TrmB family.

It catalyses the reaction guanosine(46) in tRNA + S-adenosyl-L-methionine = N(7)-methylguanosine(46) in tRNA + S-adenosyl-L-homocysteine. Its pathway is tRNA modification; N(7)-methylguanine-tRNA biosynthesis. In terms of biological role, catalyzes the formation of N(7)-methylguanine at position 46 (m7G46) in tRNA. The protein is tRNA (guanine-N(7)-)-methyltransferase of Mycoplasmopsis synoviae (strain 53) (Mycoplasma synoviae).